We begin with the raw amino-acid sequence, 298 residues long: Lipoyl synthase (298 aa).

The [4Fe-4S] cluster site is built by Cys-40, Cys-45, Cys-51, Cys-67, Cys-71, Cys-74, and Ser-280. In terms of domain architecture, Radical SAM core spans 53–269; it reads AVRKTATFMI…KEIALSKGFS (217 aa).

It belongs to the radical SAM superfamily. Lipoyl synthase family. [4Fe-4S] cluster serves as cofactor.

It is found in the cytoplasm. It carries out the reaction [[Fe-S] cluster scaffold protein carrying a second [4Fe-4S](2+) cluster] + N(6)-octanoyl-L-lysyl-[protein] + 2 oxidized [2Fe-2S]-[ferredoxin] + 2 S-adenosyl-L-methionine + 4 H(+) = [[Fe-S] cluster scaffold protein] + N(6)-[(R)-dihydrolipoyl]-L-lysyl-[protein] + 4 Fe(3+) + 2 hydrogen sulfide + 2 5'-deoxyadenosine + 2 L-methionine + 2 reduced [2Fe-2S]-[ferredoxin]. The protein operates within protein modification; protein lipoylation via endogenous pathway; protein N(6)-(lipoyl)lysine from octanoyl-[acyl-carrier-protein]. Catalyzes the radical-mediated insertion of two sulfur atoms into the C-6 and C-8 positions of the octanoyl moiety bound to the lipoyl domains of lipoate-dependent enzymes, thereby converting the octanoylated domains into lipoylated derivatives. The polypeptide is Lipoyl synthase (Bacillus cereus (strain ATCC 10987 / NRS 248)).